The following is a 58-amino-acid chain: Small ribosomal subunit protein eS27 (58 aa).

4 residues coordinate Zn(2+): C10, C13, C29, and C32. Residues 10–32 (CPDCEHEQVIFDHPSTIVKCIIC) form a C4-type zinc finger.

Belongs to the eukaryotic ribosomal protein eS27 family. In terms of assembly, part of the 30S ribosomal subunit. Requires Zn(2+) as cofactor.

The sequence is that of Small ribosomal subunit protein eS27 from Archaeoglobus fulgidus (strain ATCC 49558 / DSM 4304 / JCM 9628 / NBRC 100126 / VC-16).